Reading from the N-terminus, the 657-residue chain is Methyl-accepting chemotaxis protein CtpL (657 aa).

The Cytoplasmic portion of the chain corresponds to 1–5 (MRLKQ). A helical transmembrane segment spans residues 6-26 (LTNLNTLLLLTVCLALGITLW). The Periplasmic segment spans residues 27–305 (WSQRAMERPF…ERQRLQGQVR (279 aa)). A helical membrane pass occupies residues 306 to 326 (LIQGGMIALILLIALAIDSLQ). The HAMP domain maps to 327-380 (RRLARVLGQLVPALSAWADGDFSRPISLRTRTEDLRNLEDSLNRLRSFLAELVG). Topologically, residues 327-657 (RRLARVLGQL…LRTTVQAFRL (331 aa)) are cytoplasmic. Positions 385 to 621 (RAEQVAGSSQ…EIRSHSERIH (237 aa)) constitute a Methyl-accepting transducer domain.

It belongs to the methyl-accepting chemotaxis (MCP) protein family.

The protein resides in the cell inner membrane. Functionally, chemotactic-signal transducers respond to changes in the concentration of attractants and repellents in the environment, transduce a signal from the outside to the inside of the cell, and facilitate sensory adaptation through the variation of the level of methylation. Chemoreceptor for inorganic phosphate, which is required for taxis at low concentrations of phosphate. Is also responsible for the positive chemotaxis toward 4-chloroaniline (4CA) and catechol. Does not recognize inorganic phosphate directly, but via a complex between the periplasmic protein PstS and inorganic phosphate. In Pseudomonas aeruginosa (strain ATCC 15692 / DSM 22644 / CIP 104116 / JCM 14847 / LMG 12228 / 1C / PRS 101 / PAO1), this protein is Methyl-accepting chemotaxis protein CtpL.